A 131-amino-acid chain; its full sequence is C-C motif chemokine 21 (131 aa).

A signal peptide spans 1–23 (MAQSLALSLLILVLAFGIPGTQG). 3 disulfides stabilise this stretch: Cys-31–Cys-57, Cys-32–Cys-75, and Cys-103–Cys-119. The tract at residues 89–131 (HLDKTPTPRKPVQGCRKDRGVPKNGKKGKGCKRTEQSQTPKGP) is disordered.

This sequence belongs to the intercrine beta (chemokine CC) family. Monomer. Binds to CCR7. Interacts with PDPN; relocalizes PDPN to the basolateral membrane. Interacts with TNFAIP6 (via Link domain). Interacts with GPR174.

It is found in the secreted. Its function is as follows. Inhibits hemopoiesis and stimulates chemotaxis. Chemotactic in vitro for thymocytes and activated T-cells, but not for B-cells, macrophages, or neutrophils. Shows preferential activity towards naive T-cells. May play a role in mediating homing of lymphocytes to secondary lymphoid organs. Binds to atypical chemokine receptor ACKR4 and mediates the recruitment of beta-arrestin (ARRB1/2) to ACKR4. This is C-C motif chemokine 21 (CCL21) from Macaca mulatta (Rhesus macaque).